The sequence spans 432 residues: MTVYHFVGIKGTGMSPLAQILHDNGYNVQGSDIEKYIFTQTALEERNIPIYPFDPENIKPGMTVIAGNAFPDTHPEIEKAQAEGLPVVRYHKFLGDYLKKFTSIAVTGAHGKTSTTGLLSHVIKKAKPTSYLIGDGTGKGCENSEYFVLEACEYRRHFLSYQPDYAIMTNIDFDHPDYFANIDDVFDAFQTMALQVNKGIIACGDDEYLMKIHANVPVVYYGFAEENDFQARNVIKNTEGTTFDVFVRNTFYDTFYIPAYGSHNVLNALAVIALCHYEQVDVDIIKEGLQTFGGVKRRFNEKHAGSQVLIDDYAHHPTEITVTIEAARQKYPERDIVAVFQPHTFTRTQSFLNEFAESLKKADYVYLCDIFGSARENAGKLTIGDLQEKIPQAKLIDENDTSILKEHENAVLIFMGAGDIQKYLRAYENVLA.

108–114 contacts ATP; it reads GAHGKTS.

The protein belongs to the MurCDEF family.

The protein resides in the cytoplasm. The catalysed reaction is UDP-N-acetyl-alpha-D-muramate + L-alanine + ATP = UDP-N-acetyl-alpha-D-muramoyl-L-alanine + ADP + phosphate + H(+). The protein operates within cell wall biogenesis; peptidoglycan biosynthesis. In terms of biological role, cell wall formation. This Bacillus licheniformis (strain ATCC 14580 / DSM 13 / JCM 2505 / CCUG 7422 / NBRC 12200 / NCIMB 9375 / NCTC 10341 / NRRL NRS-1264 / Gibson 46) protein is UDP-N-acetylmuramate--L-alanine ligase.